Here is a 476-residue protein sequence, read N- to C-terminus: Cardiolipin synthase (476 aa).

2 helical membrane passes run H2–I22 and W31–F51. PLD phosphodiesterase domains are found at residues I207 to Y234 and E389 to S416. Active-site residues include H212, K214, D219, H394, K396, and D401.

Belongs to the phospholipase D family. Cardiolipin synthase subfamily.

The protein resides in the cell membrane. It carries out the reaction 2 a 1,2-diacyl-sn-glycero-3-phospho-(1'-sn-glycerol) = a cardiolipin + glycerol. Its function is as follows. Catalyzes the reversible phosphatidyl group transfer from one phosphatidylglycerol molecule to another to form cardiolipin (CL) (diphosphatidylglycerol) and glycerol. In Clostridium perfringens (strain SM101 / Type A), this protein is Cardiolipin synthase (cls).